The following is a 140-amino-acid chain: MIDFDNQTDTNLDITLLESIATFLSPREVELILLDDEAMRKINQEHRGIDKSTDVLSFPLEGGDFLPLGSILLSIDRVRAEAELRGHSIEAEAALLFIHGMLHLLGYDHEYDQGEQRFKEEELITRFGLPSSLIVRTEEL.

Residues His99, His103, and His109 each contribute to the Zn(2+) site.

It belongs to the endoribonuclease YbeY family. Zn(2+) is required as a cofactor.

The protein resides in the cytoplasm. Functionally, single strand-specific metallo-endoribonuclease involved in late-stage 70S ribosome quality control and in maturation of the 3' terminus of the 16S rRNA. This is Endoribonuclease YbeY from Wolinella succinogenes (strain ATCC 29543 / DSM 1740 / CCUG 13145 / JCM 31913 / LMG 7466 / NCTC 11488 / FDC 602W) (Vibrio succinogenes).